Consider the following 205-residue polypeptide: Ribosomal RNA small subunit methyltransferase G (205 aa).

Residues glycine 66, phenylalanine 71, 119–120 (IE), and arginine 135 each bind S-adenosyl-L-methionine.

It belongs to the methyltransferase superfamily. RNA methyltransferase RsmG family.

It is found in the cytoplasm. It catalyses the reaction guanosine(527) in 16S rRNA + S-adenosyl-L-methionine = N(7)-methylguanosine(527) in 16S rRNA + S-adenosyl-L-homocysteine. Its function is as follows. Specifically methylates the N7 position of guanine in position 527 of 16S rRNA. This chain is Ribosomal RNA small subunit methyltransferase G, found in Rhizobium etli (strain CIAT 652).